A 456-amino-acid chain; its full sequence is RuvB-like 1 (456 aa).

Lys2 participates in a covalent cross-link: Glycyl lysine isopeptide (Lys-Gly) (interchain with G-Cter in SUMO2). 70 to 77 serves as a coordination point for ATP; that stretch reads GPPGTGKT. Lys225 is covalently cross-linked (Glycyl lysine isopeptide (Lys-Gly) (interchain with G-Cter in SUMO1); alternate). Lys225 participates in a covalent cross-link: Glycyl lysine isopeptide (Lys-Gly) (interchain with G-Cter in SUMO2); alternate. A Glycyl lysine isopeptide (Lys-Gly) (interchain with G-Cter in SUMO2) cross-link involves residue Lys445. Residue Lys453 is modified to N6-acetyllysine.

It belongs to the RuvB family. Forms homohexameric rings. Can form a dodecamer with RUVBL2 made of two stacked hexameric rings; however, even though RUVBL1 and RUVBL2 are present in equimolar ratio, the oligomeric status of each hexamer is not known. Oligomerization may regulate binding to nucleic acids and conversely, binding to nucleic acids may affect the dodecameric assembly. Interaction of the complex with DHX34 results in conformational changes of the N-terminus of the RUVBL2 subunits, resulting in loss of nucleotide binding ability and ATP hydrolysis of the complex. Interacts with the transcriptional activation domain of MYC. Component of the RNA polymerase II holoenzyme complex. May also act to bridge the LEF1/TCF1-CTNNB1 complex and TBP. Component of the NuA4 histone acetyltransferase complex which contains the catalytic subunit KAT5/TIP60 and the subunits EP400, TRRAP/PAF400, BRD8/SMAP, EPC1, DMAP1/DNMAP1, RUVBL1/TIP49, RUVBL2, ING3, actin, ACTL6A/BAF53A, MORF4L1/MRG15, MORF4L2/MRGX, MRGBP, YEATS4/GAS41, VPS72/YL1 and MEAF6. The NuA4 complex interacts with MYC and the adenovirus E1A protein. RUVBL1 interacts with EP400. Component of a NuA4-related complex which contains EP400, TRRAP/PAF400, SRCAP, BRD8/SMAP, EPC1, DMAP1/DNMAP1, RUVBL1/TIP49, RUVBL2, actin, ACTL6A/BAF53A, VPS72 and YEATS4/GAS41. Component of the BAF53 complex, at least composed of ACTL6A/BAF53A, RUVBL1/TIP49, SMARCA2/BRM, and TRRAP/PAF400. Component of some MLL1/MLL complex, at least composed of the core components KMT2A/MLL1, ASH2L, HCFC1/HCF1, WDR5 and RBBP5, as well as the facultative components BACC1, CHD8, E2F6, HSP70, INO80C, KANSL1, LAS1L, MAX, MCRS1, MGA, MYST1/MOF, PELP1, PHF20, PRP31, RING2, RUVB1/TIP49A, RUVB2/TIP49B, SENP3, TAF1, TAF4, TAF6, TAF7, TAF9 and TEX10. Associates with alpha and gamma tubulins, particularly during metaphase and early anaphase. Interacts with NPAT. Component of the chromatin-remodeling INO80 complex; specifically part of a complex module associated with the helicase ATP-binding and the helicase C-terminal domain of INO80. Interacts with IGHMBP2. Interacts with OFD1. Interacts with HINT1. Component of a complex with USP49 and PSMC5. Component of a SWR1-like complex. Component of the R2TP complex composed at least of RUVBL1, RUVBL2, RPAP3 and PIHD1. Component of the PAQosome complex which is responsible for the biogenesis of several protein complexes and which consists of R2TP complex members RUVBL1, RUVBL2, RPAP3 and PIH1D1, URI complex members PFDN2, PFDN6, PDRG1, UXT and URI1 as well as ASDURF, POLR2E and DNAAF10/WDR92. Interacts with PIH1D1. Interacts with ITFG1. Interacts with WAC; WAC positively regulates MTOR activity by promoting the assembly of the TTT complex composed of TELO2, TTI1 and TTI2 and the RUVBL complex composed of RUVBL1 and RUVBL2 into the TTT-RUVBL complex which leads to the dimerization of the mTORC1 complex and its subsequent activation. The RUVBL1/RUVBL2 complex interacts with ZNHIT1 (via HIT-type zinc finger), ZNHIT3 (via HIT-type zinc finger), ZNHIT6 (via HIT-type zinc finger) and DDX59/ZNHIT5 (via HIT-type zinc finger) in the presence of ADP. Interacts with NOPCHAP1; the interaction is direct and disrupted upon ATP binding. Interacts with SMG1. Interacts with NOP2, NOP56 and NUFIP1. In terms of assembly, (Microbial infection) Interacts with Mumps L polymerase; this interaction regulates the viral transcription. As to expression, ubiquitously expressed with high expression in heart, skeletal muscle and testis.

The protein resides in the nucleus matrix. It localises to the nucleus. Its subcellular location is the nucleoplasm. It is found in the cytoplasm. The protein localises to the membrane. The protein resides in the cytoskeleton. It localises to the microtubule organizing center. Its subcellular location is the centrosome. It is found in the dynein axonemal particle. The catalysed reaction is ATP + H2O = ADP + phosphate + H(+). In terms of biological role, possesses single-stranded DNA-stimulated ATPase and ATP-dependent DNA helicase (3' to 5') activity; hexamerization is thought to be critical for ATP hydrolysis and adjacent subunits in the ring-like structure contribute to the ATPase activity. Component of the NuA4 histone acetyltransferase complex which is involved in transcriptional activation of select genes principally by acetylation of nucleosomal histones H4 and H2A. This modification may both alter nucleosome-DNA interactions and promote interaction of the modified histones with other proteins which positively regulate transcription. This complex may be required for the activation of transcriptional programs associated with oncogene and proto-oncogene mediated growth induction, tumor suppressor mediated growth arrest and replicative senescence, apoptosis, and DNA repair. The NuA4 complex ATPase and helicase activities seem to be, at least in part, contributed by the association of RUVBL1 and RUVBL2 with EP400. NuA4 may also play a direct role in DNA repair when recruited to sites of DNA damage. Component of a SWR1-like complex that specifically mediates the removal of histone H2A.Z/H2AZ1 from the nucleosome. Proposed core component of the chromatin remodeling INO80 complex which exhibits DNA- and nucleosome-activated ATPase activity and catalyzes ATP-dependent nucleosome sliding. Plays an essential role in oncogenic transformation by MYC and also modulates transcriptional activation by the LEF1/TCF1-CTNNB1 complex. Essential for cell proliferation. May be able to bind plasminogen at cell surface and enhance plasminogen activation. In Homo sapiens (Human), this protein is RuvB-like 1.